Here is a 301-residue protein sequence, read N- to C-terminus: Ribosomal RNA large subunit methyltransferase F (301 aa).

This sequence belongs to the methyltransferase superfamily. METTL16/RlmF family.

The protein localises to the cytoplasm. It catalyses the reaction adenosine(1618) in 23S rRNA + S-adenosyl-L-methionine = N(6)-methyladenosine(1618) in 23S rRNA + S-adenosyl-L-homocysteine + H(+). Specifically methylates the adenine in position 1618 of 23S rRNA. The sequence is that of Ribosomal RNA large subunit methyltransferase F from Colwellia psychrerythraea (strain 34H / ATCC BAA-681) (Vibrio psychroerythus).